Consider the following 434-residue polypeptide: Alpha-enolase (434 aa).

N-acetylserine is present on Ser2. Residue Lys5 is modified to N6-acetyllysine. Ser40 serves as a coordination point for Mg(2+). At Tyr44 the chain carries Phosphotyrosine. N6-acetyllysine; alternate is present on Lys60. An N6-succinyllysine; alternate modification is found at Lys60. An N6-acetyllysine mark is found at Lys64 and Lys71. Lys89 carries the N6-acetyllysine; alternate modification. The residue at position 89 (Lys89) is an N6-succinyllysine; alternate. At Lys126 the chain carries N6-acetyllysine. Residues His158 and Glu167 each coordinate substrate. 2 positions are modified to N6-acetyllysine: Lys193 and Lys199. N6-acetyllysine; alternate is present on Lys202. Residue Lys202 forms a Glycyl lysine isopeptide (Lys-Gly) (interchain with G-Cter in SUMO2); alternate linkage. Glu210 serves as the catalytic Proton donor. An N6-acetyllysine; alternate mark is found at Lys228 and Lys233. Position 228 is an N6-succinyllysine; alternate (Lys228). Lys228 carries the N6-(2-hydroxyisobutyryl)lysine; alternate modification. The residue at position 233 (Lys233) is an N6-malonyllysine; alternate. Residue Asp245 participates in Mg(2+) binding. Lys256 carries the post-translational modification N6-acetyllysine. Ser263 is subject to Phosphoserine. The residue at position 281 (Lys281) is an N6-acetyllysine; alternate. At Lys281 the chain carries N6-(2-hydroxyisobutyryl)lysine; alternate. The residue at position 285 (Lys285) is an N6-acetyllysine. Tyr287 bears the Phosphotyrosine mark. The residue at position 291 (Ser291) is a Phosphoserine. 2 residues coordinate Mg(2+): Glu293 and Asp318. Substrate-binding residues include Glu293 and Asp318. Lys335 and Lys343 each carry N6-acetyllysine. The Proton acceptor role is filled by Lys343. Substrate-binding positions include 370–373 and Lys394; that span reads SHRS. A required for interaction with PLG region spans residues 405-434; sequence AKYNQILRIEEELGSKAKFAGRSFRNPLAK. Lys406 is modified (N6-acetyllysine). The residue at position 420 (Lys420) is an N6-acetyllysine; alternate. Lys420 is modified (N6-succinyllysine; alternate). Lys420 carries the N6-malonyllysine; alternate modification.

It belongs to the enolase family. In terms of assembly, mammalian enolase is composed of 3 isozyme subunits, alpha, beta and gamma, which can form homodimers or heterodimers which are cell-type and development-specific. ENO1 interacts with PLG in the neuronal plasma membrane and promotes its activation. The C-terminal lysine is required for this binding. Interacts with ENO4 and PGAM2. Interacts with CMTM6. The cofactor is Mg(2+). ISGylated. In terms of processing, lysine 2-hydroxyisobutyrylation (Khib) by p300/EP300 activates the phosphopyruvate hydratase activity. Expressed in flagella of epididymal sperm. The alpha/alpha homodimer is expressed in embryo and in most adult tissues. The alpha/beta heterodimer and the beta/beta homodimer are found in striated muscle, and the alpha/gamma heterodimer and the gamma/gamma homodimer in neurons.

Its subcellular location is the cytoplasm. The protein localises to the cell membrane. The catalysed reaction is (2R)-2-phosphoglycerate = phosphoenolpyruvate + H2O. The protein operates within carbohydrate degradation; glycolysis; pyruvate from D-glyceraldehyde 3-phosphate: step 4/5. In terms of biological role, glycolytic enzyme that catalyzes the conversion of 2-phosphoglycerate to phosphoenolpyruvate. In addition to glycolysis, involved in various processes such as growth control, hypoxia tolerance and allergic responses. May also function in the intravascular and pericellular fibrinolytic system due to its ability to serve as a receptor and activator of plasminogen on the cell surface of several cell-types such as leukocytes and neurons. Stimulates immunoglobulin production. This chain is Alpha-enolase (Eno1), found in Rattus norvegicus (Rat).